Here is a 182-residue protein sequence, read N- to C-terminus: Peptidyl-tRNA hydrolase (182 aa).

Y14 contributes to the tRNA binding site. H19 functions as the Proton acceptor in the catalytic mechanism. TRNA-binding residues include F60, N62, and N106.

It belongs to the PTH family. In terms of assembly, monomer.

Its subcellular location is the cytoplasm. The catalysed reaction is an N-acyl-L-alpha-aminoacyl-tRNA + H2O = an N-acyl-L-amino acid + a tRNA + H(+). In terms of biological role, hydrolyzes ribosome-free peptidyl-tRNAs (with 1 or more amino acids incorporated), which drop off the ribosome during protein synthesis, or as a result of ribosome stalling. Its function is as follows. Catalyzes the release of premature peptidyl moieties from peptidyl-tRNA molecules trapped in stalled 50S ribosomal subunits, and thus maintains levels of free tRNAs and 50S ribosomes. This chain is Peptidyl-tRNA hydrolase, found in Campylobacter concisus (strain 13826).